Here is a 162-residue protein sequence, read N- to C-terminus: Ribosomal RNA large subunit methyltransferase H (162 aa).

S-adenosyl-L-methionine is bound by residues leucine 78, glycine 109, and 128 to 133; that span reads LSALTL.

The protein belongs to the RNA methyltransferase RlmH family. In terms of assembly, homodimer.

The protein resides in the cytoplasm. The catalysed reaction is pseudouridine(1915) in 23S rRNA + S-adenosyl-L-methionine = N(3)-methylpseudouridine(1915) in 23S rRNA + S-adenosyl-L-homocysteine + H(+). Its function is as follows. Specifically methylates the pseudouridine at position 1915 (m3Psi1915) in 23S rRNA. The chain is Ribosomal RNA large subunit methyltransferase H from Psychrobacter cryohalolentis (strain ATCC BAA-1226 / DSM 17306 / VKM B-2378 / K5).